The following is a 427-amino-acid chain: Glutamate-1-semialdehyde 2,1-aminomutase (427 aa).

The residue at position 265 (K265) is an N6-(pyridoxal phosphate)lysine.

Belongs to the class-III pyridoxal-phosphate-dependent aminotransferase family. HemL subfamily. Homodimer. It depends on pyridoxal 5'-phosphate as a cofactor.

It is found in the cytoplasm. The enzyme catalyses (S)-4-amino-5-oxopentanoate = 5-aminolevulinate. The protein operates within porphyrin-containing compound metabolism; protoporphyrin-IX biosynthesis; 5-aminolevulinate from L-glutamyl-tRNA(Glu): step 2/2. This Pseudomonas putida (strain ATCC 700007 / DSM 6899 / JCM 31910 / BCRC 17059 / LMG 24140 / F1) protein is Glutamate-1-semialdehyde 2,1-aminomutase.